The primary structure comprises 559 residues: Formate--tetrahydrofolate ligase (559 aa).

Residue 68–75 (TPAGEGKT) coordinates ATP.

Belongs to the formate--tetrahydrofolate ligase family.

The catalysed reaction is (6S)-5,6,7,8-tetrahydrofolate + formate + ATP = (6R)-10-formyltetrahydrofolate + ADP + phosphate. Its pathway is one-carbon metabolism; tetrahydrofolate interconversion. The protein is Formate--tetrahydrofolate ligase of Rhizobium meliloti (strain 1021) (Ensifer meliloti).